The following is a 470-amino-acid chain: Probable citrate synthase, mitochondrial (470 aa).

Residues H297, H351, and D406 contribute to the active site.

Belongs to the citrate synthase family. In terms of assembly, homodimer.

The protein localises to the mitochondrion matrix. It carries out the reaction oxaloacetate + acetyl-CoA + H2O = citrate + CoA + H(+). It functions in the pathway carbohydrate metabolism; tricarboxylic acid cycle; isocitrate from oxaloacetate: step 1/2. The sequence is that of Probable citrate synthase, mitochondrial from Leishmania infantum.